The chain runs to 243 residues: Probable transcriptional regulatory protein PTH_1024 (243 aa).

This sequence belongs to the TACO1 family.

Its subcellular location is the cytoplasm. This chain is Probable transcriptional regulatory protein PTH_1024, found in Pelotomaculum thermopropionicum (strain DSM 13744 / JCM 10971 / SI).